A 246-amino-acid chain; its full sequence is Probable 2-phosphosulfolactate phosphatase (246 aa).

Belongs to the ComB family. It depends on Mg(2+) as a cofactor.

It catalyses the reaction (2R)-O-phospho-3-sulfolactate + H2O = (2R)-3-sulfolactate + phosphate. This chain is Probable 2-phosphosulfolactate phosphatase, found in Nostoc punctiforme (strain ATCC 29133 / PCC 73102).